Here is a 568-residue protein sequence, read N- to C-terminus: Sentrin-specific protease 3 (568 aa).

The segment at 1 to 119 (MKETIQGTGS…PSHRKTCSQR (119 aa)) is disordered. 3 positions are modified to phosphoserine: serine 52, serine 71, and serine 73. Positions 72–87 (ASEEEEEEEEEDEEEV) are enriched in acidic residues. Over residues 106–119 (RALRPSHRKTCSQR) the composition is skewed to basic residues. Short sequence motifs (nuclear localization signal) lie at residues 119–122 (RRRR) and 147–153 (RHRGRRR). The interval 155 to 174 (LAHPKNHLSPQEGGATPQVP) is disordered. Serine 163 is subject to Phosphoserine. Position 170 is a phosphothreonine (threonine 170). Phosphoserine occurs at positions 175, 182, 206, and 226. The interval 380–537 (HVLTMDDLGT…AFVLQYCKHL (158 aa)) is protease. Catalysis depends on residues histidine 459 and aspartate 476. Cysteine 526 (nucleophile) is an active-site residue.

It belongs to the peptidase C48 family. Component of some MLL1/MLL complex, at least composed of the core components KMT2A/MLL1, ASH2L, HCFC1/HCF1, WDR5 and RBBP5, as well as the facultative components BACC1, CHD8, E2F6, HSP70, INO80C, KANSL1, LAS1L, MAX, MCRS1, MGA, MYST1/MOF, PELP1, PHF20, PRP31, RING2, RUVB1/TIP49A, RUVB2/TIP49B, SENP3, TAF1, TAF4, TAF6, TAF7, TAF9 and TEX10. Interacts with EP300, NPM1 and CDCA8. Component of the 5FMC complex, at least composed of PELP1, LAS1L, TEX10, WDR18 and SENP3; the complex interacts with methylated CHTOP and ZNF148. Interacts with NOL9. Interacts with CCAR2.

The protein localises to the nucleus. Its subcellular location is the nucleolus. It localises to the nucleoplasm. It is found in the cytoplasm. On oxidative stress, SENP3 degradation is blocked by inhibition of its ubiquitination, which stabilizes it as it accumulates in the nucleoplasm. Protease that releases SUMO2 and SUMO3 monomers from sumoylated substrates, but has only weak activity against SUMO1 conjugates. Deconjugates SUMO2 from MEF2D, which increases its transcriptional activation capability. Deconjugates SUMO2 and SUMO3 from CDCA8. Redox sensor that, when redistributed into nucleoplasm, can act as an effector to enhance HIF1A transcriptional activity by desumoylating EP300. Required for rRNA processing through deconjugation of SUMO2 and SUMO3 from nucleophosmin, NPM1. Plays a role in the regulation of sumoylation status of ZNF148. Functions as a component of the Five Friends of Methylated CHTOP (5FMC) complex; the 5FMC complex is recruited to ZNF148 by methylated CHTOP, leading to desumoylation of ZNF148 and subsequent transactivation of ZNF148 target genes. Deconjugates SUMO2 from KAT5. Catalyzes desumoylation of MRE11. The polypeptide is Sentrin-specific protease 3 (Senp3) (Mus musculus (Mouse)).